The primary structure comprises 409 residues: Accessory Sec system protein translocase subunit SecY2 (409 aa).

A run of 10 helical transmembrane segments spans residues 16–36, 61–81, 104–124, 132–152, 161–181, 190–210, 242–262, 286–306, 341–361, and 374–394; these read ILIT…PIPG, LSQV…MILL, VVML…FQYH, LLLA…IGNL, MTIL…PLIF, LAII…ITFE, GMAF…IILL, GVVI…FVNI, LFGT…LLFA, and TGIF…FQVI.

It belongs to the SecY/SEC61-alpha family. SecY2 subfamily. In terms of assembly, component of the accessory SecA2/SecY2 protein translocase complex required to export cell wall proteins. May form heterotrimers with SecE and SecG subunits.

Its subcellular location is the cell membrane. Its function is as follows. Part of the accessory SecA2/SecY2 system specifically required for export of possible cell wall proteins. The central subunit of a protein translocation channel. The polypeptide is Accessory Sec system protein translocase subunit SecY2 (Streptococcus agalactiae serotype Ia (strain ATCC 27591 / A909 / CDC SS700)).